The primary structure comprises 159 residues: Large ribosomal subunit protein eL29 (159 aa).

Basic residues predominate over residues 1-26 (MAKSKNHTTHNQSRKWHRNGIKKPRS). The segment at 1–32 (MAKSKNHTTHNQSRKWHRNGIKKPRSQRYESL) is disordered. N6-methyllysine is present on Lys-5. A Phosphoserine modification is found at Ser-31. Lys-33 carries the N6-acetyllysine modification. Positions 117–127 (RLCRPKAKAKA) are enriched in basic residues. The segment at 117–159 (RLCRPKAKAKAKAKDQTKAQAAAPASVPAQAPKRTQAPTKASE) is disordered. Over residues 134–149 (KAQAAAPASVPAQAPK) the composition is skewed to low complexity. Ser-142 bears the Phosphoserine mark.

This sequence belongs to the eukaryotic ribosomal protein eL29 family. As to quaternary structure, component of the large ribosomal subunit.

It is found in the cytoplasm. In terms of biological role, component of the large ribosomal subunit. The ribosome is a large ribonucleoprotein complex responsible for the synthesis of proteins in the cell. The chain is Large ribosomal subunit protein eL29 (RPL29) from Homo sapiens (Human).